We begin with the raw amino-acid sequence, 673 residues long: Clotting factor G alpha subunit (673 aa).

An N-terminal signal peptide occupies residues 1 to 19; that stretch reads MLVLLCCVVLHVGVARICC. Residues 27–257 form the GH16 domain; it reads LVWSDEFTNG…YVRVYQDAST (231 aa). The active-site Nucleophile is the Glu-137. Glu-142 functions as the Proton donor in the catalytic mechanism. N-linked (GlcNAc...) asparagine glycosylation occurs at Asn-186. The Ricin B-type lectin domain occupies 266-404; sequence LDGYYFVQNR…NQLSGQWKLI (139 aa). CBM6 domains are found at residues 411–533 and 549–671; these read KLIQ…IKIT and KLIQ…IRIT.

It belongs to the glycosyl hydrolase 16 family. Clotting factor G is a heterodimer composed of two non-covalently associated subunits, alpha and beta. In terms of processing, in presence of (1-&gt;3)-beta-glucan, proteolytically cleaved into a 55kDa and a 17kDa forms. As to expression, expressed in hemocytes (at protein level).

Component of the heterodimer clotting factor G which may play a role in defense mechanisms against fungi. Initiates a (1-&gt;3)-beta-glucan-sensing clotting pathway whereby the alpha subunit binds to glucans containing (1-&gt;3)-beta linkages, which are components of the fungal cell wall, and the beta subunit catalyzes the activation of proclotting enzyme. This is Clotting factor G alpha subunit from Tachypleus tridentatus (Japanese horseshoe crab).